The primary structure comprises 483 residues: Probable zinc metalloprotease PTRG_04977 (483 aa).

A signal peptide spans 1–18 (MLFRSALLSNVLLLPACA). Asn-96 and Asn-121 each carry an N-linked (GlcNAc...) asparagine glycan. Residues His-167, Asp-187, and Glu-220 each coordinate Zn(2+). Asn-235 carries N-linked (GlcNAc...) asparagine glycosylation. Asp-247 lines the Zn(2+) pocket. Residues Asn-310, Asn-362, Asn-401, Asn-411, and Asn-421 are each glycosylated (N-linked (GlcNAc...) asparagine). The 88-residue stretch at 396-483 (PAMPRNVTID…KSPAVYPFPG (88 aa)) folds into the Fibronectin type-III domain.

Belongs to the peptidase M28 family. M28B subfamily. The cofactor is Zn(2+).

The protein resides in the secreted. The protein is Probable zinc metalloprotease PTRG_04977 of Pyrenophora tritici-repentis (strain Pt-1C-BFP) (Wheat tan spot fungus).